A 211-amino-acid chain; its full sequence is Urease accessory protein UreG (211 aa).

A GTP-binding site is contributed by 11–18 (GPVGSGKT).

Belongs to the SIMIBI class G3E GTPase family. UreG subfamily. As to quaternary structure, homodimer. UreD, UreF and UreG form a complex that acts as a GTP-hydrolysis-dependent molecular chaperone, activating the urease apoprotein by helping to assemble the nickel containing metallocenter of UreC. The UreE protein probably delivers the nickel.

The protein localises to the cytoplasm. Its function is as follows. Facilitates the functional incorporation of the urease nickel metallocenter. This process requires GTP hydrolysis, probably effectuated by UreG. The polypeptide is Urease accessory protein UreG (Photorhabdus laumondii subsp. laumondii (strain DSM 15139 / CIP 105565 / TT01) (Photorhabdus luminescens subsp. laumondii)).